The following is a 128-amino-acid chain: DNA-directed RNA polymerase subunit omega (128 aa).

The protein belongs to the RNA polymerase subunit omega family. The RNAP catalytic core consists of 2 alpha, 1 beta, 1 beta' and 1 omega subunit. When a sigma factor is associated with the core the holoenzyme is formed, which can initiate transcription.

The catalysed reaction is RNA(n) + a ribonucleoside 5'-triphosphate = RNA(n+1) + diphosphate. Functionally, promotes RNA polymerase assembly. Latches the N- and C-terminal regions of the beta' subunit thereby facilitating its interaction with the beta and alpha subunits. In Azorhizobium caulinodans (strain ATCC 43989 / DSM 5975 / JCM 20966 / LMG 6465 / NBRC 14845 / NCIMB 13405 / ORS 571), this protein is DNA-directed RNA polymerase subunit omega.